Here is a 440-residue protein sequence, read N- to C-terminus: Chromosome partition protein MukF (440 aa).

The tract at residues 208–236 (LDETSGNLRELQDTLNAAGDKLQSQLLRI) is leucine-zipper.

It belongs to the MukF family. As to quaternary structure, interacts, and probably forms a ternary complex, with MukE and MukB via its C-terminal region. The complex formation is stimulated by calcium or magnesium. It is required for an interaction between MukE and MukB.

It is found in the cytoplasm. Its subcellular location is the nucleoid. Functionally, involved in chromosome condensation, segregation and cell cycle progression. May participate in facilitating chromosome segregation by condensation DNA from both sides of a centrally located replisome during cell division. Not required for mini-F plasmid partitioning. Probably acts via its interaction with MukB and MukE. Overexpression results in anucleate cells. It has a calcium binding activity. This Histophilus somni (strain 2336) (Haemophilus somnus) protein is Chromosome partition protein MukF.